A 293-amino-acid polypeptide reads, in one-letter code: tRNA pseudouridine synthase B (293 aa).

Asp-40 functions as the Nucleophile in the catalytic mechanism.

The protein belongs to the pseudouridine synthase TruB family. Type 1 subfamily.

It catalyses the reaction uridine(55) in tRNA = pseudouridine(55) in tRNA. In terms of biological role, responsible for synthesis of pseudouridine from uracil-55 in the psi GC loop of transfer RNAs. The protein is tRNA pseudouridine synthase B of Rickettsia akari (strain Hartford).